A 473-amino-acid chain; its full sequence is Photosystem II CP43 reaction center protein (473 aa).

Residues 1 to 14 (MKTLYSLRRFYHVE) constitute a propeptide that is removed on maturation. T15 carries the N-acetylthreonine modification. T15 is modified (phosphothreonine). The next 5 membrane-spanning stretches (helical) occupy residues 69–93 (LFEVAHFVPEKPMYEQGLILLPHLA), 134–155 (LLGPETLEESFPFFGYVWKDRN), 178–200 (KALYFGGVYDTWAPGGGDVRKIA), 255–275 (KPFAWARRAFVWSGEAYLSYS), and 291–312 (WFNNTAYPSEFYGPTGPEASQA). E367 provides a ligand contact to [CaMn4O5] cluster. Residues 447 to 471 (RARAAAAGFEKGIDRDFEPVLSMTP) form a helical membrane-spanning segment.

The protein belongs to the PsbB/PsbC family. PsbC subfamily. In terms of assembly, PSII is composed of 1 copy each of membrane proteins PsbA, PsbB, PsbC, PsbD, PsbE, PsbF, PsbH, PsbI, PsbJ, PsbK, PsbL, PsbM, PsbT, PsbX, PsbY, PsbZ, Psb30/Ycf12, at least 3 peripheral proteins of the oxygen-evolving complex and a large number of cofactors. It forms dimeric complexes. The cofactor is Binds multiple chlorophylls and provides some of the ligands for the Ca-4Mn-5O cluster of the oxygen-evolving complex. It may also provide a ligand for a Cl- that is required for oxygen evolution. PSII binds additional chlorophylls, carotenoids and specific lipids..

It is found in the plastid membrane. In terms of biological role, one of the components of the core complex of photosystem II (PSII). It binds chlorophyll and helps catalyze the primary light-induced photochemical processes of PSII. PSII is a light-driven water:plastoquinone oxidoreductase, using light energy to abstract electrons from H(2)O, generating O(2) and a proton gradient subsequently used for ATP formation. In Cuscuta exaltata (Tall dodder), this protein is Photosystem II CP43 reaction center protein.